The sequence spans 140 residues: Coiled-coil domain-containing protein 126 (140 aa).

A signal peptide spans 1 to 35; that stretch reads MFRTISRKNMSQKLSFLLLVFGLIWGLMLLHYTLQ. Asn110 carries an N-linked (GlcNAc...) asparagine glycan. Residues 118-130 show a composition bias toward low complexity; that stretch reads NGTNGNLVPVTTN. The disordered stretch occupies residues 118–140; that stretch reads NGTNGNLVPVTTNKRTSVSGSVR. Over residues 131–140 the composition is skewed to polar residues; sequence KRTSVSGSVR.

It localises to the secreted. In Mus musculus (Mouse), this protein is Coiled-coil domain-containing protein 126 (Ccdc126).